The chain runs to 105 residues: Large ribosomal subunit protein uL24 (105 aa).

The protein belongs to the universal ribosomal protein uL24 family. In terms of assembly, part of the 50S ribosomal subunit.

Its function is as follows. One of two assembly initiator proteins, it binds directly to the 5'-end of the 23S rRNA, where it nucleates assembly of the 50S subunit. One of the proteins that surrounds the polypeptide exit tunnel on the outside of the subunit. This Novosphingobium aromaticivorans (strain ATCC 700278 / DSM 12444 / CCUG 56034 / CIP 105152 / NBRC 16084 / F199) protein is Large ribosomal subunit protein uL24.